The chain runs to 59 residues: Potassium channel toxin alpha-KTx 15.5 (59 aa).

The first 22 residues, 1 to 22 (MKFSSIILLTLLICSMSIFGNC), serve as a signal peptide directing secretion. Pyrrolidone carboxylic acid is present on Q23. Intrachain disulfides connect C30/C50, C35/C55, and C39/C57.

This sequence belongs to the short scorpion toxin superfamily. Potassium channel inhibitor family. Alpha-KTx 15 subfamily. As to expression, expressed by the venom gland.

The protein resides in the secreted. Functionally, blocker of A-type voltage-gated potassium channels of cerebellar granular cells. May also inhibit Kv4/KCND when coexpressed with DPP6 or DPP10. The occlusion of the outer entry of the K(+) conducting pore is partially reversible and affects both open and closed channels. It shares the same target in rat brain than BmTX3 (AC Q8I0L5) and AmmTX3 (AC P60208). This is Potassium channel toxin alpha-KTx 15.5 from Androctonus australis (Sahara scorpion).